The primary structure comprises 601 residues: Glutathione-regulated potassium-efflux system protein KefB (601 aa).

The next 13 helical transmembrane spans lie at 4-24, 29-49, 55-75, 87-107, 115-135, 152-172, 177-197, 207-227, 230-250, 268-288, 291-311, 324-344, and 356-376; these read SDFLLAGVLFLFAAVAAVPLA, IGAVLGYLLAGIAIGPWGLGF, EILHFSELGVVFLMFIIGLEL, IFGVGAAQVLLSAALLAGLLM, AAVVGGIGLAMSSTAMALQLM, VLLFQDLAVIPALALVPLLAG, HFDWMKIGMKVLAFVGMLIGG, FIAASGVREVFTAATLLLVLG, LFMDALGLSMALGTFIAGVLL, GLLLGLFFISVGMSLNLGVLY, LLWVVISVVVLVAVKILVLYL, MQFAGVLSQGGEFAFVLFSTA, and ALLLVTVTLSMMTTPLLMKLV. One can recognise an RCK N-terminal domain in the interval 400-519; the sequence is KPQVIVVGFG…AGVTQFSRET (120 aa).

This sequence belongs to the monovalent cation:proton antiporter 2 (CPA2) transporter (TC 2.A.37) family. KefB subfamily. In terms of assembly, interacts with the regulatory subunit KefG.

The protein resides in the cell inner membrane. In terms of biological role, pore-forming subunit of a potassium efflux system that confers protection against electrophiles. Catalyzes K(+)/H(+) antiport. In Shigella sonnei (strain Ss046), this protein is Glutathione-regulated potassium-efflux system protein KefB.